A 92-amino-acid polypeptide reads, in one-letter code: UPF0223 protein SPCG_1392 (92 aa).

Belongs to the UPF0223 family.

The sequence is that of UPF0223 protein SPCG_1392 from Streptococcus pneumoniae (strain CGSP14).